The primary structure comprises 119 residues: Large ribosomal subunit protein bL20 (119 aa).

Belongs to the bacterial ribosomal protein bL20 family.

In terms of biological role, binds directly to 23S ribosomal RNA and is necessary for the in vitro assembly process of the 50S ribosomal subunit. It is not involved in the protein synthesizing functions of that subunit. This chain is Large ribosomal subunit protein bL20, found in Aromatoleum aromaticum (strain DSM 19018 / LMG 30748 / EbN1) (Azoarcus sp. (strain EbN1)).